We begin with the raw amino-acid sequence, 159 residues long: Transcriptional repressor NrdR (159 aa).

A zinc finger spans residues 3-34 (CPYCQSEDTQVKDSRPAEDGAAIRRRRVCPDC). The region spanning 49–139 (LVVVKKSGRK…VYRNFREAKD (91 aa)) is the ATP-cone domain.

This sequence belongs to the NrdR family. The cofactor is Zn(2+).

In terms of biological role, negatively regulates transcription of bacterial ribonucleotide reductase nrd genes and operons by binding to NrdR-boxes. This is Transcriptional repressor NrdR from Mesorhizobium japonicum (strain LMG 29417 / CECT 9101 / MAFF 303099) (Mesorhizobium loti (strain MAFF 303099)).